Reading from the N-terminus, the 156-residue chain is Envelope glycoprotein L (156 aa).

The signal sequence occupies residues 1-16 (MSPLVAVLVFFSAALG). The gL alphaherpesvirus-type domain maps to 50 to 156 (ELEWDDEDHP…LRYNGGPPAE (107 aa)). Cys71 and Cys95 are joined by a disulfide.

The protein belongs to the herpesviridae glycoprotein L (gL) family. Alphaherpesvirinae gL subfamily. As to quaternary structure, interacts with glycoprotein H (gH); this interaction is necessary for the correct processing and cell surface expression of gH. The heterodimer gH/gL seems to interact with gB trimers during fusion. Post-translationally, O-glycosylated, and sialylated.

It localises to the virion membrane. The protein localises to the host cell membrane. It is found in the host Golgi apparatus. Its subcellular location is the host trans-Golgi network. In terms of biological role, the heterodimer glycoprotein H-glycoprotein L is required for the fusion of viral and plasma membranes leading to virus entry into the host cell. Acts as a functional inhibitor of gH and maintains gH in an inhibited form. Upon binding to host integrins, gL dissociates from gH leading to activation of the viral fusion glycoproteins gB and gH. The protein is Envelope glycoprotein L of Suid herpesvirus 1 (strain Indiana-Funkhauser / Becker) (SuHV-1).